The chain runs to 393 residues: Cytochrome b (393 aa).

The next 4 membrane-spanning stretches (helical) occupy residues 32–52 (FGSL…FLAM), 76–98 (WLIR…LHIG), 113–133 (LWSI…LGYV), and 179–199 (FFSL…MHLL). Residues histidine 82 and histidine 96 each coordinate heme b. Heme b contacts are provided by histidine 183 and histidine 197. Histidine 202 lines the a ubiquinone pocket. The next 4 helical transmembrane spans lie at 225 to 245 (FTFK…LFVF), 289 to 309 (LIGV…PILD), 321 to 341 (LMRF…FIGS), and 348 to 368 (YVEI…VVVP).

It belongs to the cytochrome b family. As to quaternary structure, fungal cytochrome b-c1 complex contains 10 subunits; 3 respiratory subunits, 2 core proteins and 5 low-molecular weight proteins. Cytochrome b-c1 complex is a homodimer. Requires heme b as cofactor.

It localises to the mitochondrion inner membrane. Its function is as follows. Component of the ubiquinol-cytochrome c reductase complex (complex III or cytochrome b-c1 complex) that is part of the mitochondrial respiratory chain. The b-c1 complex mediates electron transfer from ubiquinol to cytochrome c. Contributes to the generation of a proton gradient across the mitochondrial membrane that is then used for ATP synthesis. In Mycosarcoma maydis (Corn smut fungus), this protein is Cytochrome b (COB).